A 252-amino-acid polypeptide reads, in one-letter code: 2-succinyl-6-hydroxy-2,4-cyclohexadiene-1-carboxylate synthase (252 aa).

It belongs to the AB hydrolase superfamily. MenH family. As to quaternary structure, monomer.

It catalyses the reaction 5-enolpyruvoyl-6-hydroxy-2-succinyl-cyclohex-3-ene-1-carboxylate = (1R,6R)-6-hydroxy-2-succinyl-cyclohexa-2,4-diene-1-carboxylate + pyruvate. Its pathway is quinol/quinone metabolism; 1,4-dihydroxy-2-naphthoate biosynthesis; 1,4-dihydroxy-2-naphthoate from chorismate: step 3/7. It participates in quinol/quinone metabolism; menaquinone biosynthesis. Its function is as follows. Catalyzes a proton abstraction reaction that results in 2,5-elimination of pyruvate from 2-succinyl-5-enolpyruvyl-6-hydroxy-3-cyclohexene-1-carboxylate (SEPHCHC) and the formation of 2-succinyl-6-hydroxy-2,4-cyclohexadiene-1-carboxylate (SHCHC). In Salmonella typhi, this protein is 2-succinyl-6-hydroxy-2,4-cyclohexadiene-1-carboxylate synthase.